The sequence spans 32 residues: Delta-conotoxin-like CnVID (32 aa).

Cystine bridges form between Cys-3–Cys-18, Cys-10–Cys-22, and Cys-17–Cys-27. Residues Pro-6 and Pro-14 each carry the 4-hydroxyproline modification.

This sequence belongs to the conotoxin O1 superfamily. Expressed by the venom duct.

Its subcellular location is the secreted. Delta-conotoxins bind to site 6 of voltage-gated sodium channels (Nav) and inhibit the inactivation process. This toxin acts on Nav1.2/SCN2A, Nav1.3/SCN3A and Nav1.6/SCN8A (EC(50)=1.7 uM). In Conus consors (Singed cone), this protein is Delta-conotoxin-like CnVID.